Reading from the N-terminus, the 487-residue chain is Cytochrome P450 716A75 (487 aa).

A helical transmembrane segment spans residues 5–25 (FVSLLSLFLLILLPLSLLFLF). Cys-434 lines the heme pocket.

The protein belongs to the cytochrome P450 family. It depends on heme as a cofactor.

The protein localises to the membrane. It carries out the reaction beta-amyrin + reduced [NADPH--hemoprotein reductase] + O2 = erythrodiol + oxidized [NADPH--hemoprotein reductase] + H2O + H(+). The catalysed reaction is erythrodiol + reduced [NADPH--hemoprotein reductase] + O2 = oleanolic aldehyde + oxidized [NADPH--hemoprotein reductase] + 2 H2O + H(+). The enzyme catalyses oleanolic aldehyde + reduced [NADPH--hemoprotein reductase] + O2 = oleanolate + oxidized [NADPH--hemoprotein reductase] + H2O + 2 H(+). Catalyzes the C-28 oxidation of beta-amyrin to form erythrodiol. Catalyzes the C-28 oxidation of erythrodiol to form oleanolic aldehyde. Catalyzes the C-28 oxidation of oleanolic aldehyde to form oleanolate. The protein is Cytochrome P450 716A75 of Maesa lanceolata (False assegai).